The following is a 1218-amino-acid chain: Protein jagged-1 (1218 aa).

An N-terminal signal peptide occupies residues 1 to 33; the sequence is MRSPRTRGRPGRPLSLLLALLCALRAKVCGASG. At 34 to 1067 the chain is on the extracellular side; that stretch reads QFELEILSMQ…QRRPLKNRTD (1034 aa). Asparagine 143 carries an N-linked (GlcNAc...) asparagine glycan. In terms of domain architecture, DSL spans 185 to 229; the sequence is VTCDDHYYGFGCNKFCRPRDDFFGHYACDQNGNKTCMEGWMGPDC. Cystine bridges form between cysteine 187–cysteine 196 and cysteine 200–cysteine 212. Residues 199 to 207 are important for interaction with NOTCH1; sequence FCRPRDDFF. Asparagine 217 carries N-linked (GlcNAc...) asparagine glycosylation. Intrachain disulfides connect cysteine 220/cysteine 229, cysteine 234/cysteine 245, cysteine 238/cysteine 251, cysteine 253/cysteine 262, cysteine 265/cysteine 276, cysteine 271/cysteine 282, cysteine 284/cysteine 293, cysteine 300/cysteine 312, cysteine 306/cysteine 322, cysteine 324/cysteine 333, cysteine 340/cysteine 351, cysteine 345/cysteine 360, cysteine 362/cysteine 371, cysteine 378/cysteine 389, cysteine 383/cysteine 398, cysteine 400/cysteine 409, cysteine 416/cysteine 427, cysteine 421/cysteine 436, cysteine 438/cysteine 447, cysteine 454/cysteine 464, cysteine 458/cysteine 473, cysteine 475/cysteine 484, cysteine 491/cysteine 502, cysteine 496/cysteine 511, cysteine 513/cysteine 522, cysteine 529/cysteine 540, cysteine 534/cysteine 549, cysteine 551/cysteine 560, cysteine 578/cysteine 605, cysteine 599/cysteine 615, cysteine 617/cysteine 626, cysteine 633/cysteine 644, cysteine 638/cysteine 653, cysteine 655/cysteine 664, cysteine 671/cysteine 682, cysteine 676/cysteine 691, cysteine 693/cysteine 702, cysteine 709/cysteine 720, cysteine 714/cysteine 729, and cysteine 731/cysteine 740. The 34-residue stretch at 230-263 folds into the EGF-like 1 domain; it reads NKAICRQGCSPKHGSCKLPGDCRCQYGWQGLYCD. Positions 264-294 constitute an EGF-like 2; atypical domain; the sequence is KCIPHPGCVHGTCNEPWQCLCETNWGGQLCD. EGF-like domains follow at residues 296–334 and 336–372; these read DLNY…PNCE and AEHA…PTCS. One can recognise an EGF-like 5; calcium-binding domain in the interval 374 to 410; sequence NIDDCSPNNCSHGGTCQDLVNGFKCVCPPQWTGKTCQ. The N-linked (GlcNAc...) asparagine glycan is linked to asparagine 382. Positions 412–448 constitute an EGF-like 6; calcium-binding domain; the sequence is DANECEAKPCVNARSCKNLIASYYCDCLPGWMGQNCD. The EGF-like 7; calcium-binding domain occupies 450–485; the sequence is NINDCLGQCQNDASCRDLVNGYRCICPPGYAGDHCE. An EGF-like 8; calcium-binding domain is found at 487–523; that stretch reads DIDECASNPCLNGGHCQNEINRFQCLCPTGFSGNLCQ. 2 consecutive EGF-like domains span residues 525–561 and 586–627; these read DIDY…KNCS and DTPE…TYCH. An N-linked (GlcNAc...) asparagine glycan is attached at asparagine 559. In terms of domain architecture, EGF-like 11; calcium-binding spans 629–665; the sequence is NINDCESNPCKNGGTCIDGVNSYKCICSDGWEGAHCE. In terms of domain architecture, EGF-like 12; calcium-binding spans 667-703; the sequence is NINDCSQNPCHYGGTCRDLVNDFYCDCKNGWKGKTCH. EGF-like domains follow at residues 705–741 and 744–780; these read RDSQ…TTCN and RNSS…PICT. A glycan (N-linked (GlcNAc...) asparagine) is linked at asparagine 745. Disulfide bonds link cysteine 748–cysteine 759, cysteine 753–cysteine 768, cysteine 770–cysteine 779, cysteine 786–cysteine 797, cysteine 791–cysteine 806, cysteine 808–cysteine 817, cysteine 824–cysteine 835, cysteine 829–cysteine 844, and cysteine 846–cysteine 855. The EGF-like 15; calcium-binding domain occupies 782–818; that stretch reads NTNDCSPHPCYNSGTCVDGDNWYRCECAPGFAGPDCR. In terms of domain architecture, EGF-like 16; calcium-binding spans 820-856; sequence NINECQSSPCAFGATCVDEINGYQCICPPGHSGAKCH. N-linked (GlcNAc...) asparagine glycosylation is found at asparagine 960, asparagine 991, asparagine 1045, and asparagine 1064. The chain crosses the membrane as a helical span at residues 1068–1093; it reads FLVPLLSSVLTVAWVCCLVTAFYWCV. Residues 1094–1218 are Cytoplasmic-facing; the sequence is RKRRKPSSHT…QSLNRMEYIV (125 aa). The disordered stretch occupies residues 1181 to 1218; that stretch reads REEKAPSGTPTKHPNWTNKQDNRDLESAQSLNRMEYIV. The segment covering 1188 to 1199 has biased composition (polar residues); sequence GTPTKHPNWTNK.

As to quaternary structure, interacts with NOTCH1, NOTCH2 and NOTCH3. As to expression, widely expressed in many tissues, with highest expression in brain, heart, muscle and thymus.

The protein localises to the membrane. Its subcellular location is the cell membrane. Functionally, ligand for multiple Notch receptors and involved in the mediation of Notch signaling. May be involved in cell-fate decisions during hematopoiesis. Seems to be involved in early and late stages of mammalian cardiovascular development. Inhibits myoblast differentiation. May regulate fibroblast growth factor-induced angiogenesis. The protein is Protein jagged-1 (Jag1) of Mus musculus (Mouse).